Here is a 138-residue protein sequence, read N- to C-terminus: Cysteine desulfuration protein SufE (138 aa).

Cys51 functions as the Cysteine persulfide intermediate in the catalytic mechanism.

Belongs to the SufE family. In terms of assembly, homodimer. Interacts with SufS.

It is found in the cytoplasm. Its pathway is cofactor biosynthesis; iron-sulfur cluster biosynthesis. Participates in cysteine desulfuration mediated by SufS. Cysteine desulfuration mobilizes sulfur from L-cysteine to yield L-alanine and constitutes an essential step in sulfur metabolism for biosynthesis of a variety of sulfur-containing biomolecules. Functions as a sulfur acceptor for SufS, by mediating the direct transfer of the sulfur atom from the S-sulfanylcysteine of SufS, an intermediate product of cysteine desulfuration process. This is Cysteine desulfuration protein SufE from Escherichia coli O45:K1 (strain S88 / ExPEC).